Consider the following 88-residue polypeptide: MAHKKGVGSSKNGRDSKAKRLGVKRYAGQFVTAGSILVRQRGTKFHPGNNVGIGGDDTLFAKIDGYVVFERKGKNKKQVSVYPQNVAI.

The protein belongs to the bacterial ribosomal protein bL27 family.

The protein is Large ribosomal subunit protein bL27 of Carboxydothermus hydrogenoformans (strain ATCC BAA-161 / DSM 6008 / Z-2901).